The primary structure comprises 550 residues: ATP synthase subunit alpha (550 aa).

172-179 (GDRKTGKT) provides a ligand contact to ATP. The tract at residues 514–550 (EDEQRVNEPPAKPLAGEENRETVTRFRDGTTDRPAES) is disordered. Residues 528–550 (AGEENRETVTRFRDGTTDRPAES) are compositionally biased toward basic and acidic residues.

It belongs to the ATPase alpha/beta chains family. As to quaternary structure, F-type ATPases have 2 components, CF(1) - the catalytic core - and CF(0) - the membrane proton channel. CF(1) has five subunits: alpha(3), beta(3), gamma(1), delta(1), epsilon(1). CF(0) has three main subunits: a(1), b(2) and c(9-12). The alpha and beta chains form an alternating ring which encloses part of the gamma chain. CF(1) is attached to CF(0) by a central stalk formed by the gamma and epsilon chains, while a peripheral stalk is formed by the delta and b chains.

It is found in the cell membrane. The catalysed reaction is ATP + H2O + 4 H(+)(in) = ADP + phosphate + 5 H(+)(out). Its function is as follows. Produces ATP from ADP in the presence of a proton gradient across the membrane. The alpha chain is a regulatory subunit. This chain is ATP synthase subunit alpha, found in Salinispora arenicola (strain CNS-205).